A 352-amino-acid chain; its full sequence is Galactokinase (352 aa).

14 to 17 contacts substrate; that stretch reads EHTD. ATP is bound by residues serine 46 and 96 to 102; that span reads GAGLSSS. Mg(2+) contacts are provided by serine 102 and glutamate 134. Aspartate 146 acts as the Proton acceptor in catalysis. Substrate is bound at residue tyrosine 196.

This sequence belongs to the GHMP kinase family. GalK subfamily.

The protein resides in the cytoplasm. The catalysed reaction is alpha-D-galactose + ATP = alpha-D-galactose 1-phosphate + ADP + H(+). It participates in carbohydrate metabolism; galactose metabolism. Functionally, catalyzes the transfer of the gamma-phosphate of ATP to D-galactose to form alpha-D-galactose-1-phosphate (Gal-1-P). The protein is Galactokinase of Thermosipho africanus (strain TCF52B).